The chain runs to 351 residues: MELIPVLEPEQKPQNRHWYVLEPTGAAPGVSVGHTCSFLPAAHHHDEDGGGKGKIVIVGGANPSGSFADSYIINLDTHQWDLPDWEGLQARYEHCSFTPESEPQSLWVFGGAEKSTNRNCVQALRFSDGGEGRRFWQSVQVTGVPPSGRTYHTNSACVGNRLFVFSGGEAGSSAVTDAQLHVFDAVSVTWTQPDTTGTPPAQRHGHVITAVGSDIYIHGGMSGEKFHSDMFTLNTESLKWQKVKAKGDLPPGVAAHSSVTFNKNIFIFGGMTADGATNSMFKFQCDKQRWTLLKFEGDLPPGRLDHSMCLLPWRVKMEDSEHADVQHLCFVFGGMDTQGVIFNDCLVTVLT.

Kelch repeat units follow at residues 54–102 (KIVI…PESE), 105–156 (SLWV…TNSA), 162–210 (LFVF…VITA), 214–263 (DIYI…TFNK), 264–313 (NIFI…LLPW), and 328–351 (LCFV…TVLT).

Rab9 effector required for endosome to trans-Golgi network (TGN) transport. In Danio rerio (Zebrafish), this protein is Rab9 effector protein with kelch motifs (rabepk).